Reading from the N-terminus, the 212-residue chain is Octanoyltransferase (212 aa).

Residues 31 to 209 (AETQDEIWLV…HFANLLGYNI (179 aa)) enclose the BPL/LPL catalytic domain. Residues 70–77 (RGGQITYH), 138–140 (SLG), and 151–153 (GLA) each bind substrate. C169 (acyl-thioester intermediate) is an active-site residue.

This sequence belongs to the LipB family.

It is found in the cytoplasm. The catalysed reaction is octanoyl-[ACP] + L-lysyl-[protein] = N(6)-octanoyl-L-lysyl-[protein] + holo-[ACP] + H(+). It participates in protein modification; protein lipoylation via endogenous pathway; protein N(6)-(lipoyl)lysine from octanoyl-[acyl-carrier-protein]: step 1/2. Its function is as follows. Catalyzes the transfer of endogenously produced octanoic acid from octanoyl-acyl-carrier-protein onto the lipoyl domains of lipoate-dependent enzymes. Lipoyl-ACP can also act as a substrate although octanoyl-ACP is likely to be the physiological substrate. The protein is Octanoyltransferase of Haemophilus influenzae (strain ATCC 51907 / DSM 11121 / KW20 / Rd).